We begin with the raw amino-acid sequence, 216 residues long: Small ribosomal subunit protein uS2 (216 aa).

Belongs to the universal ribosomal protein uS2 family.

This is Small ribosomal subunit protein uS2 from Carsonella ruddii (strain PV).